Consider the following 126-residue polypeptide: Small ribosomal subunit protein uS13 (126 aa).

Residues 92–126 (HRMGLPVRGQRTRTNARTRRGRRQTVAGKKKAPGK) are disordered. A compositionally biased stretch (basic residues) spans 101–126 (QRTRTNARTRRGRRQTVAGKKKAPGK).

This sequence belongs to the universal ribosomal protein uS13 family. As to quaternary structure, part of the 30S ribosomal subunit. Forms a loose heterodimer with protein S19. Forms two bridges to the 50S subunit in the 70S ribosome.

Located at the top of the head of the 30S subunit, it contacts several helices of the 16S rRNA. In the 70S ribosome it contacts the 23S rRNA (bridge B1a) and protein L5 of the 50S subunit (bridge B1b), connecting the 2 subunits; these bridges are implicated in subunit movement. Contacts the tRNAs in the A and P-sites. The polypeptide is Small ribosomal subunit protein uS13 (Nostoc sp. (strain PCC 7120 / SAG 25.82 / UTEX 2576)).